Here is a 298-residue protein sequence, read N- to C-terminus: MFRKFLFIQLLIVTSLVKAEIIEVDSLNKITQDFKVNYNKNYLPQDLLVVTVLDKFLFKSFGVPIGEYIDQHRYLALAPLFSHINKNPKIIYITQLILTNNSYKKELQESDFPNFVNEMSNSQIPIIAVNNGFTGNFNNIPKFEIWFADYLKKNFYIDFSKSFPNNNYIIFNNLDSFDNTYPVFYKGILTSNNIPASKVILNFLIQINFIPKCFILISSSRELLRSMEFQLNNYSSNILFIGYHYNNKSISDDKDYKDIAYYTKMINDLIPQINKLKRNNPPLKNNNAKSKNSYETYK.

The first 19 residues, 1–19, serve as a signal peptide directing secretion; the sequence is MFRKFLFIQLLIVTSLVKA. The segment at 278–298 is disordered; it reads RNNPPLKNNNAKSKNSYETYK. A compositionally biased stretch (low complexity) spans 279 to 298; sequence NNPPLKNNNAKSKNSYETYK.

This sequence to R.prowazekii RP296.

This is an uncharacterized protein from Rickettsia prowazekii (strain Madrid E).